Here is a 258-residue protein sequence, read N- to C-terminus: Imidazole glycerol phosphate synthase subunit HisF (258 aa).

Catalysis depends on residues aspartate 11 and aspartate 130.

This sequence belongs to the HisA/HisF family. Heterodimer of HisH and HisF.

The protein resides in the cytoplasm. The enzyme catalyses 5-[(5-phospho-1-deoxy-D-ribulos-1-ylimino)methylamino]-1-(5-phospho-beta-D-ribosyl)imidazole-4-carboxamide + L-glutamine = D-erythro-1-(imidazol-4-yl)glycerol 3-phosphate + 5-amino-1-(5-phospho-beta-D-ribosyl)imidazole-4-carboxamide + L-glutamate + H(+). It participates in amino-acid biosynthesis; L-histidine biosynthesis; L-histidine from 5-phospho-alpha-D-ribose 1-diphosphate: step 5/9. Functionally, IGPS catalyzes the conversion of PRFAR and glutamine to IGP, AICAR and glutamate. The HisF subunit catalyzes the cyclization activity that produces IGP and AICAR from PRFAR using the ammonia provided by the HisH subunit. The chain is Imidazole glycerol phosphate synthase subunit HisF from Yersinia pseudotuberculosis serotype O:3 (strain YPIII).